Reading from the N-terminus, the 341-residue chain is Major histocompatibility complex class I-related protein 1 (341 aa).

Positions methionine 1–serine 22 are cleaved as a signal peptide. Residues arginine 23–serine 109 are alpha-1. Residues arginine 23–threonine 201 are antigen-binding cleft. Topologically, residues arginine 23–methionine 302 are extracellular. The 8-(9H-purin-6-yl)-2-oxa-8-azabicyclo[3.3.1]nona-3,6-diene-4,6-dicarbaldehyde site is built by tyrosine 29 and arginine 31. Positions 31, 46, and 65 each coordinate 5-(2-oxoethylideneamino)-6-(D-ribitylamino)uracil. 5-(2-oxopropylideneamino)-6-(D-ribitylamino)uracil-binding residues include arginine 31, serine 46, and lysine 65. 7-hydroxy-6-methyl-8-(1-D-ribityl)lumazine contacts are provided by arginine 31, serine 46, and lysine 65. Lysine 65 and histidine 80 together coordinate 8-(9H-purin-6-yl)-2-oxa-8-azabicyclo[3.3.1]nona-3,6-diene-4,6-dicarbaldehyde. Lysine 65 lines the 2-amino-4-oxopteridine-6-carbaldehyde pocket. Lysine 65 lines the pyridoxal pocket. An N-linked (GlcNAc...) asparagine glycan is attached at asparagine 107. The tract at residues glycine 110 to threonine 201 is alpha-2. An 8-(9H-purin-6-yl)-2-oxa-8-azabicyclo[3.3.1]nona-3,6-diene-4,6-dicarbaldehyde-binding site is contributed by arginine 116. 3 residues coordinate 5-(2-oxoethylideneamino)-6-(D-ribitylamino)uracil: arginine 116, tyrosine 174, and glutamine 175. 5-(2-oxopropylideneamino)-6-(D-ribitylamino)uracil contacts are provided by arginine 116, tyrosine 174, and glutamine 175. 7-hydroxy-6-methyl-8-(1-D-ribityl)lumazine contacts are provided by arginine 116, tyrosine 174, and glutamine 175. 2 cysteine pairs are disulfide-bonded: cysteine 120–cysteine 183 and cysteine 222–cysteine 278. Residues glutamate 202 to glutamine 293 form an alpha-3 region. In terms of domain architecture, Ig-like C1-type spans proline 203–proline 299. Residues glutamate 294 to methionine 302 are connecting peptide. The chain crosses the membrane as a helical span at residues lysine 303–tryptophan 323. Residues arginine 324–arginine 341 are Cytoplasmic-facing.

The protein belongs to the MHC class I family. Heterotrimer that consists of MR1, B2M and metabolite antigen. Major classes of metabolite ligands presented by MR1 include riboflavin-related antigens, pyrimidines and ribityl lumazines, nucleobase adducts and folate derivatives. Forms reversible covalent Schiff base complexes with microbial pyrimidine-based metabolite, which serves as a molecular switch triggering complete folding, stable association with B2M and translocation of the ternary complex from endoplasmic reticulum to the plasma membrane. Alternatively, forms non-Schiff base complexes with ribityl lumazines. On antigen-presenting cells, the ternary complex interacts with TCR on MR1-restricted T cells. Interacts with TAPBP and TAPBPL chaperones in the endoplasmic reticulum. TAPBP associated or not with MHC class I peptide loading complex binds ligand-free MR1 or MR1-B2M complex, providing for stable MR1 pools ready for metabolite antigen processing. TAPBPL interacts with MR1 in a ligand-independent way; this interaction may stabilize MR1 pool and facilitate ligand loading and dissociation. Structurally, MR1-B2M heterodimer adopts a topology similar to classical MHC class I molecules, with alpha-1 and alpha-2 domains of MR1 forming the antigen-binding cleft composed of two alpha-helices resting on a floor of 7-stranded anti-parallel beta-pleated sheet. MR1-B2M heterodimer (via alpha-helices) interacts with TCR (via CDR domains). Post-translationally, N-glycosylated.

It localises to the cell membrane. The protein localises to the endoplasmic reticulum membrane. Its subcellular location is the golgi apparatus membrane. It is found in the early endosome membrane. The protein resides in the late endosome membrane. Functionally, antigen-presenting molecule specialized in displaying microbial pyrimidine-based metabolites to alpha-beta T cell receptors (TCR) on innate-type mucosal-associated invariant T (MAIT) cells. In complex with B2M preferentially presents riboflavin-derived metabolites to semi-invariant TCRs on MAIT cells, guiding immune surveillance of the microbial metabolome at mucosal epithelial barriers. Signature pyrimidine-based microbial antigens are generated via non-enzymatic condensation of metabolite intermediates of the riboflavin pathway with by-products arising from other metabolic pathways such as glycolysis. Typical potent antigenic metabolites are 5-(2-oxoethylideneamino)-6-D-ribitylaminouracil (5-OE-RU) and 5-(2-oxopropylideneamino)-6-D-ribitylaminouracil (5-OP-RU), products of condensation of 5-amino-6-D-ribityaminouracil (5-A-RU) with glyoxal or methylglyoxal by-products, respectively. May present microbial antigens to various MAIT cell subsets, providing for unique recognition of diverse microbes, including pathogens that do not synthesize riboflavin. Upon antigen recognition, elicits rapid innate-type MAIT cell activation to eliminate pathogenic microbes by directly killing infected cells. During T cell development, drives thymic selection and post-thymic terminal differentiation of MAIT cells in a process dependent on commensal microflora. Acts as an immune sensor of cancer cell metabolome. May present a tumor-specific or -associated metabolite essential for cancer cell survival to a pan-cancer TCR on a non-MAIT CD8-positive T cell clone, triggering T cell-mediated killing of a wide range of cancer cell types. May present tumor-enriched pyridoxal and pyridoxal 5'-phosphate antigens, enabling preferential recognition of cancer cells. Presents nucleobase carbonyl adducts generated during oxidative stress. Captures M3Ade, a nucleobase adduct composed of one adenine modified by a malondialdehyde trimer, for recognition by MR1-restricted T cell clones expressing a polyclonal TCR repertoire. This Pan troglodytes (Chimpanzee) protein is Major histocompatibility complex class I-related protein 1.